The chain runs to 502 residues: Regulator of hypoxia-inducible factor 1 (502 aa).

Transmembrane regions (helical) follow at residues 54 to 74, 92 to 112, 138 to 158, 188 to 208, 241 to 261, 272 to 292, 335 to 355, 367 to 387, 396 to 416, 437 to 457, and 465 to 485; these read LLAW…VFSC, LDVL…NHTG, IFGA…VLSG, LAPS…NALL, MGYL…PIFL, MALT…YCTA, GPFL…YIMV, LIVA…PNAG, TAVF…ALYF, AYLL…LQAA, and LVLP…YLFI.

As to expression, expressed in intestine, some sensory neurons in the head, body wall muscles and socket cells.

The protein resides in the endoplasmic reticulum membrane. Its function is as follows. Involved in the response to variation in environmental oxygen levels by inhibiting hif-1-mediated gene transcription in a vhl-1-independent manner. Plays a role in susceptibility to killing mediated by P.aeruginosa and by pore-forming toxins produced by B.thuringiensis. Probably by preventing hif-1 transcriptional activity, regulates behavioral responses, such as locomotion speed following acute reoxygenation. Plays a role in normal egg-laying probably by regulating spermatogenesis and in body morphogenesis. The protein is Regulator of hypoxia-inducible factor 1 of Caenorhabditis elegans.